The primary structure comprises 602 residues: RNA-binding NOB1-like protein (602 aa).

The disordered stretch occupies residues 1-25; sequence MDPKPTSMWSSIVKKDPPSKPPVND. The PINc domain occupies 48-134; the sequence is VVDANAIIEG…LKLIALSYTL (87 aa). 2 disordered regions span residues 258–278 and 301–331; these read SQGQYDDDDDASDWRPAVSRS and IQKDQEADKARHTKEANETHAKDSGKNGEDI. Positions 301 to 329 are enriched in basic and acidic residues; that stretch reads IQKDQEADKARHTKEANETHAKDSGKNGE. The stretch at 331–365 forms a coiled coil; the sequence is ISSILKDMRLEEESLRALQEETEETNAEATLINGE. Residues 452-522 form an NOB1 zinc finger; it reads IRQLHRWILK…QYSIPMPKGG (71 aa). 4 residues coordinate Zn(2+): cysteine 462, cysteine 465, cysteine 477, and cysteine 480.

It belongs to the NOB1 family. As to quaternary structure, component of the small ribosomal subunit, ribosomal RNA processing complex (SSU RRP complex). Highly expressed in flowers and siliques and at lower levels in roots, hypocotyls, stems, leaves and seeds.

Its subcellular location is the nucleus. The protein resides in the nucleoplasm. It is found in the cytoplasm. Its function is as follows. Essential protein required during embryogenesis and pollen development. Endonuclease cleaving pre-rRNA at the 3' end of the mature 18S rRNA (D-site); cleaves 20S pre-rRNA in the cytoplasm. Required for processing of 20S pre-rRNA precursor and biogenesis of 40S ribosomal subunits. This chain is RNA-binding NOB1-like protein, found in Arabidopsis thaliana (Mouse-ear cress).